A 295-amino-acid polypeptide reads, in one-letter code: Protein shisa-2 homolog (295 aa).

Positions 1–33 are cleaved as a signal peptide; the sequence is MWGARRSSVSSSWNAASLLQLLLAALLAAGARA. Over 34 to 110 the chain is Extracellular; that stretch reads SGEYCHGWLD…RADKDGPDGS (77 aa). The segment at 87 to 108 is disordered; it reads GCDNDRQQGAGEPGRADKDGPD. Residues 111–131 traverse the membrane as a helical segment; that stretch reads AVPIYVPFLIVGSVFVAFIIL. Over 132-295 the chain is Cytoplasmic; it reads GSLVAACCCR…EQKMYPAVTV (164 aa). The tract at residues 168–205 is disordered; it reads PSASTSRGSSSRQSSTAASSSSSANSGARAPPTRSQTN. Over residues 169-197 the composition is skewed to low complexity; it reads SASTSRGSSSRQSSTAASSSSSANSGARA.

Belongs to the shisa family.

Its subcellular location is the endoplasmic reticulum membrane. Functionally, plays an essential role in the maturation of presomitic mesoderm cells by individual attenuation of both FGF and WNT signaling. The sequence is that of Protein shisa-2 homolog (SHISA2) from Homo sapiens (Human).